Reading from the N-terminus, the 879-residue chain is Alanine--tRNA ligase (879 aa).

Residues H566, H570, C668, and H672 each coordinate Zn(2+).

It belongs to the class-II aminoacyl-tRNA synthetase family. The cofactor is Zn(2+).

The protein resides in the cytoplasm. It catalyses the reaction tRNA(Ala) + L-alanine + ATP = L-alanyl-tRNA(Ala) + AMP + diphosphate. Functionally, catalyzes the attachment of alanine to tRNA(Ala) in a two-step reaction: alanine is first activated by ATP to form Ala-AMP and then transferred to the acceptor end of tRNA(Ala). Also edits incorrectly charged Ser-tRNA(Ala) and Gly-tRNA(Ala) via its editing domain. The chain is Alanine--tRNA ligase from Clostridium perfringens (strain 13 / Type A).